The following is a 473-amino-acid chain: BTB/POZ domain-containing protein KCTD8 (473 aa).

The segment at 1-36 is disordered; it reads MALKDTGSGGSTILPISEMVSSSSSPGASAAAAPGP. Positions 21–35 are enriched in low complexity; that stretch reads SSSSSPGASAAAAPG. One can recognise a BTB domain in the interval 44–122; sequence EVVELNVGGQ…LRDKQLALPE (79 aa). Position 78 is a phosphoserine (Ser-78). Arg-80 carries the post-translational modification Omega-N-methylarginine. The interval 326–409 is disordered; that stretch reads IVSPKQEHED…WIPPPDKRRN (84 aa). Residues 330 to 346 show a composition bias toward basic and acidic residues; the sequence is KQEHEDRKHDKVTDKGS. Polar residues predominate over residues 347-388; sequence ESGTSCNELSTSSCDSHSEASTPQDNPSSAQQATAHQPNTLT. Ser-410 is subject to Phosphoserine.

As to quaternary structure, interacts as a tetramer with GABRB1 and GABRB2.

It localises to the presynaptic cell membrane. Its subcellular location is the postsynaptic cell membrane. In terms of biological role, auxiliary subunit of GABA-B receptors that determine the pharmacology and kinetics of the receptor response. Increases agonist potency and markedly alter the G-protein signaling of the receptors by accelerating onset and promoting desensitization. This Homo sapiens (Human) protein is BTB/POZ domain-containing protein KCTD8 (KCTD8).